We begin with the raw amino-acid sequence, 213 residues long: Translation initiation factor IF-3 (213 aa).

Positions 193–213 are disordered; the sequence is EKIASLPPLPPDNSGEPEDDE.

It belongs to the IF-3 family. Monomer.

It is found in the cytoplasm. IF-3 binds to the 30S ribosomal subunit and shifts the equilibrium between 70S ribosomes and their 50S and 30S subunits in favor of the free subunits, thus enhancing the availability of 30S subunits on which protein synthesis initiation begins. The protein is Translation initiation factor IF-3 of Chlorobaculum tepidum (strain ATCC 49652 / DSM 12025 / NBRC 103806 / TLS) (Chlorobium tepidum).